Reading from the N-terminus, the 825-residue chain is Interleukin-4 receptor subunit alpha (825 aa).

The first 25 residues, 1-25 (MGWLCSGLLFPVSCLVLLQVASSGN), serve as a signal peptide directing secretion. Residues 26-232 (MKVLQEPTCV…NSYREPFEQH (207 aa)) are Extracellular-facing. Residues C34 and C44 are joined by a disulfide bond. N-linked (GlcNAc...) asparagine glycosylation is present at N53. The cysteines at positions 74 and 86 are disulfide-linked. Residues N98, N128, N134, N176, and N209 are each glycosylated (N-linked (GlcNAc...) asparagine). In terms of domain architecture, Fibronectin type-III spans 125-224 (APGNLTVHTN…WSPSTKWHNS (100 aa)). A WSXWS motif motif is present at residues 212-216 (WSEWS). The helical transmembrane segment at 233–256 (LLLGVSVSCIVILAVCLLCYVSIT) threads the bilayer. The Cytoplasmic segment spans residues 257 to 825 (KIKKEWWDQI…SVGPTYMRVS (569 aa)). Residues 262-270 (WWDQIPNPA) carry the Box 1 motif motif. Disordered regions lie at residues 373 to 397 (EEEE…DFQE) and 433 to 485 (LPPS…LTCT). The required for IRS1 activation and IL4-induced cell growth stretch occupies residues 437 to 557 (GSTSAHMPWD…ETWEQILRRN (121 aa)). Positions 475-485 (PTQSPDNLTCT) are enriched in polar residues. Phosphotyrosine occurs at positions 497, 575, 603, and 631. Residues 558–657 (VLQHGAAAAP…VPVPLFTFGL (100 aa)) are required for IL4-induced gene expression. The disordered stretch occupies residues 651-703 (PLFTFGLDREPPRSPQSSHLPSSSPEHLGLEPGEKVEDMPKPPLPQEQATDPL). Low complexity predominate over residues 665-677 (PQSSHLPSSSPEH). A compositionally biased stretch (basic and acidic residues) spans 678–690 (LGLEPGEKVEDMP). The ITIM motif motif lies at 711-716 (IVYSAL). Positions 782 to 809 (PSGISEKSKSSSSFHPAPGNAQSSSQTP) are disordered.

This sequence belongs to the type I cytokine receptor family. Type 4 subfamily. As to quaternary structure, the functional IL4 receptor is formed by initial binding of IL4 to IL4R. Subsequent recruitment to the complex of the common gamma chain, in immune cells, creates a type I receptor and, in non-immune cells, of IL13RA1 forms a type II receptor. IL4R can also interact with the IL13/IL13RA1 complex to form a similar type II receptor. Interacts with PIK3C3. Interacts with the SH2-containing phosphatases, PTPN6/SHIP1, PTPN11/SHIP2 and INPP5D/SHIP. Interacts with JAK1 through a Box 1-containing region; inhibited by SOCS5. Interacts with SOCS5; inhibits IL4 signaling. Interacts with JAK3. Interacts with CLM1. Interacts with IL13RA2. Post-translationally, on IL4 binding, phosphorylated on C-terminal tyrosine residues. Phosphorylation on any one of tyrosine residues, Tyr-575, Tyr-603 or Tyr-631, is required for STAT6-induced gene induction. The soluble form (sIL4R/IL4BP) can also be produced by proteolytic cleavage at the cell surface (shedding) by a metalloproteinase. Isoform 1 and isoform 2 are highly expressed in activated T-cells.

The protein localises to the cell membrane. It localises to the secreted. In terms of biological role, receptor for both interleukin 4 and interleukin 13. Couples to the JAK1/2/3-STAT6 pathway. The IL4 response is involved in promoting Th2 differentiation. The IL4/IL13 responses are involved in regulating IgE production and, chemokine and mucus production at sites of allergic inflammation. In certain cell types, can signal through activation of insulin receptor substrates, IRS1/IRS2. Its function is as follows. Soluble IL4R (sIL4R) inhibits IL4-mediated cell proliferation and IL5 up-regulation by T-cells. In Homo sapiens (Human), this protein is Interleukin-4 receptor subunit alpha (IL4R).